Consider the following 181-residue polypeptide: ATP synthase subunit b (181 aa).

The chain crosses the membrane as a helical span at residues 23 to 43; the sequence is FIHIPTFIYTALNLVILYFIL.

This sequence belongs to the ATPase B chain family. In terms of assembly, F-type ATPases have 2 components, F(1) - the catalytic core - and F(0) - the membrane proton channel. F(1) has five subunits: alpha(3), beta(3), gamma(1), delta(1), epsilon(1). F(0) has three main subunits: a(1), b(2) and c(10-14). The alpha and beta chains form an alternating ring which encloses part of the gamma chain. F(1) is attached to F(0) by a central stalk formed by the gamma and epsilon chains, while a peripheral stalk is formed by the delta and b chains.

It is found in the cell membrane. Functionally, f(1)F(0) ATP synthase produces ATP from ADP in the presence of a proton or sodium gradient. F-type ATPases consist of two structural domains, F(1) containing the extramembraneous catalytic core and F(0) containing the membrane proton channel, linked together by a central stalk and a peripheral stalk. During catalysis, ATP synthesis in the catalytic domain of F(1) is coupled via a rotary mechanism of the central stalk subunits to proton translocation. Component of the F(0) channel, it forms part of the peripheral stalk, linking F(1) to F(0). This Acetivibrio thermocellus (strain ATCC 27405 / DSM 1237 / JCM 9322 / NBRC 103400 / NCIMB 10682 / NRRL B-4536 / VPI 7372) (Clostridium thermocellum) protein is ATP synthase subunit b.